The following is a 361-amino-acid chain: 3-dehydroquinate synthase (361 aa).

NAD(+) is bound by residues 72-77 (SGEKEK), 130-131 (TT), Lys142, and Lys151. Residues Glu184, His247, and His264 each contribute to the Zn(2+) site.

It belongs to the sugar phosphate cyclases superfamily. Dehydroquinate synthase family. Co(2+) is required as a cofactor. It depends on Zn(2+) as a cofactor. The cofactor is NAD(+).

The protein resides in the cytoplasm. It carries out the reaction 7-phospho-2-dehydro-3-deoxy-D-arabino-heptonate = 3-dehydroquinate + phosphate. It functions in the pathway metabolic intermediate biosynthesis; chorismate biosynthesis; chorismate from D-erythrose 4-phosphate and phosphoenolpyruvate: step 2/7. Catalyzes the conversion of 3-deoxy-D-arabino-heptulosonate 7-phosphate (DAHP) to dehydroquinate (DHQ). In Bacillus cereus (strain ATCC 10987 / NRS 248), this protein is 3-dehydroquinate synthase.